The following is a 261-amino-acid chain: Proteasome subunit alpha type-4 (261 aa).

Phosphoserine occurs at positions 13 and 75. Position 127 is an N6-acetyllysine (Lys127). Ser173 carries the post-translational modification Phosphoserine. At Lys176 the chain carries N6-acetyllysine. Residues 240–261 (HEEEEAKAEREKKEKEQREKDK) form a disordered region.

It belongs to the peptidase T1A family. In terms of assembly, the 26S proteasome consists of a 20S proteasome core and two 19S regulatory subunits. The 20S proteasome core is a barrel-shaped complex made of 28 subunits that are arranged in four stacked rings. The two outer rings are each formed by seven alpha subunits, and the two inner rings are formed by seven beta subunits. The proteolytic activity is exerted by three beta-subunits PSMB5, PSMB6 and PSMB7. Ubiquitous.

It localises to the cytoplasm. It is found in the nucleus. Functionally, component of the 20S core proteasome complex involved in the proteolytic degradation of most intracellular proteins. This complex plays numerous essential roles within the cell by associating with different regulatory particles. Associated with two 19S regulatory particles, forms the 26S proteasome and thus participates in the ATP-dependent degradation of ubiquitinated proteins. The 26S proteasome plays a key role in the maintenance of protein homeostasis by removing misfolded or damaged proteins that could impair cellular functions, and by removing proteins whose functions are no longer required. Associated with the PA200 or PA28, the 20S proteasome mediates ubiquitin-independent protein degradation. This type of proteolysis is required in several pathways including spermatogenesis (20S-PA200 complex) or generation of a subset of MHC class I-presented antigenic peptides (20S-PA28 complex). This Rattus norvegicus (Rat) protein is Proteasome subunit alpha type-4 (Psma4).